Here is a 240-residue protein sequence, read N- to C-terminus: Protein UL20 homolog (240 aa).

4 helical membrane-spanning segments follow: residues 76–96, 104–124, 147–167, and 203–225; these read VFYI…FFFY, LLFT…IIML, GIIV…TLFI, and VLLV…SFIG.

The protein belongs to the alphaherpesvirinae UL20 family. Interacts with gK (via N-terminus); this interaction plays a role in the coordinate transport of UL20 and gK to the trans-Golgi network (TGN), and is required for their cell surface expression. Interacts with gB. Interacts with host STING1; this interaction inhibits host interferon-beta promoter activation.

The protein resides in the virion. It is found in the host cell membrane. It localises to the host endosome membrane. Its subcellular location is the host Golgi apparatus membrane. The protein localises to the host nucleus membrane. Its function is as follows. Plays an essential role in egress of virus particles from the nucleus, cytoplasmic envelopment and virus-induced cell fusion. Forms a functional protein complex with gK and this interaction is absolutely essential for their coordinate intracellular transport, gK glycosylation, expression on host cell surface, and function. Together, they modulate gB-mediated virus-induced cell fusion and virion egress and therefore actively participate in these processes. In addition, plays a role in inhibiting the type I interferon responses by suppressing STING1-mediated activation of the IFN-beta promoter. The sequence is that of Protein UL20 homolog (39) from Homo sapiens (Human).